The chain runs to 435 residues: Phosphomethylpyrimidine synthase (435 aa).

Substrate contacts are provided by residues Asn67, Met96, Tyr125, His163, 185–187, 226–229, and Glu265; these read SRG and DGLR. His269 provides a ligand contact to Zn(2+). Tyr292 contributes to the substrate binding site. His333 contributes to the Zn(2+) binding site. [4Fe-4S] cluster contacts are provided by Cys408, Cys411, and Cys415.

Belongs to the ThiC family. The cofactor is [4Fe-4S] cluster.

It catalyses the reaction 5-amino-1-(5-phospho-beta-D-ribosyl)imidazole + S-adenosyl-L-methionine = 4-amino-2-methyl-5-(phosphooxymethyl)pyrimidine + CO + 5'-deoxyadenosine + formate + L-methionine + 3 H(+). It participates in cofactor biosynthesis; thiamine diphosphate biosynthesis. In terms of biological role, catalyzes the synthesis of the hydroxymethylpyrimidine phosphate (HMP-P) moiety of thiamine from aminoimidazole ribotide (AIR) in a radical S-adenosyl-L-methionine (SAM)-dependent reaction. In Thermus thermophilus (strain ATCC 27634 / DSM 579 / HB8), this protein is Phosphomethylpyrimidine synthase.